The following is a 349-amino-acid chain: Protein-glutamate methylesterase/protein-glutamine glutaminase (349 aa).

The Response regulatory domain maps to 5 to 122; it reads RVLSVDDSAL…REGMLAYSEM (118 aa). 4-aspartylphosphate is present on aspartate 56. Residues 152 to 344 enclose the CheB-type methylesterase domain; the sequence is LLSSEKLIAI…QQMLAKISAG (193 aa). Residues serine 164, histidine 190, and aspartate 286 contribute to the active site.

The protein belongs to the CheB family. Phosphorylated by CheA. Phosphorylation of the N-terminal regulatory domain activates the methylesterase activity.

The protein localises to the cytoplasm. The catalysed reaction is [protein]-L-glutamate 5-O-methyl ester + H2O = L-glutamyl-[protein] + methanol + H(+). The enzyme catalyses L-glutaminyl-[protein] + H2O = L-glutamyl-[protein] + NH4(+). In terms of biological role, involved in chemotaxis. Part of a chemotaxis signal transduction system that modulates chemotaxis in response to various stimuli. Catalyzes the demethylation of specific methylglutamate residues introduced into the chemoreceptors (methyl-accepting chemotaxis proteins or MCP) by CheR. Also mediates the irreversible deamidation of specific glutamine residues to glutamic acid. The polypeptide is Protein-glutamate methylesterase/protein-glutamine glutaminase (Salmonella paratyphi A (strain ATCC 9150 / SARB42)).